The primary structure comprises 183 residues: MSQTVGATRLAYSRVWHHISAVTPHPTLSTIKAPSEAITPPSLGRLASRIATILMGKHKPIWDPSTDCGDYVVVTNCAGLYTTGHKKWRKTYYRHNTRPGSLQAITMDALMEKHGGAEVLRKAVSGMLPKNRLRDKRLARLKAFEGDAHPYKENLVRFGGKVVGAPGWEEAVKAIREADMERL.

The protein belongs to the universal ribosomal protein uL13 family. In terms of assembly, component of the mitochondrial large ribosomal subunit (mt-LSU). Mature N.crassa 74S mitochondrial ribosomes consist of a small (37S) and a large (54S) subunit. The 37S small subunit contains a 16S ribosomal RNA (16S mt-rRNA) and 32 different proteins. The 54S large subunit contains a 23S rRNA (23S mt-rRNA) and 42 different proteins.

The protein resides in the mitochondrion. Functionally, component of the mitochondrial ribosome (mitoribosome), a dedicated translation machinery responsible for the synthesis of mitochondrial genome-encoded proteins, including at least some of the essential transmembrane subunits of the mitochondrial respiratory chain. The mitoribosomes are attached to the mitochondrial inner membrane and translation products are cotranslationally integrated into the membrane. The sequence is that of Large ribosomal subunit protein uL13m (mrpl23) from Neurospora crassa (strain ATCC 24698 / 74-OR23-1A / CBS 708.71 / DSM 1257 / FGSC 987).